The sequence spans 257 residues: Non-homologous end joining protein Ku (257 aa).

The Ku domain maps to 9–184 (TFGMVAIPIG…YTKPEVNEQE (176 aa)).

It belongs to the prokaryotic Ku family. In terms of assembly, homodimer. Interacts with LigD.

In terms of biological role, with LigD forms a non-homologous end joining (NHEJ) DNA repair enzyme, which repairs dsDNA breaks with reduced fidelity. Binds linear dsDNA with 5'- and 3'- overhangs but not closed circular dsDNA nor ssDNA. Recruits and stimulates the ligase activity of LigD. This chain is Non-homologous end joining protein Ku, found in Lachnoclostridium phytofermentans (strain ATCC 700394 / DSM 18823 / ISDg) (Clostridium phytofermentans).